We begin with the raw amino-acid sequence, 479 residues long: UDP-N-acetylmuramoyl-L-alanyl-D-glutamate--2,6-diaminopimelate ligase (479 aa).

Ser-21 contacts UDP-N-acetyl-alpha-D-muramoyl-L-alanyl-D-glutamate. Gly-98–Ser-104 lines the ATP pocket. UDP-N-acetyl-alpha-D-muramoyl-L-alanyl-D-glutamate contacts are provided by residues Thr-144–Thr-145, Ser-171, Gln-177, and Arg-179. An N6-carboxylysine modification is found at Lys-211. Meso-2,6-diaminopimelate-binding positions include Arg-372, Asp-396–Arg-399, Gly-446, and Glu-450. The Meso-diaminopimelate recognition motif motif lies at Asp-396–Arg-399.

It belongs to the MurCDEF family. MurE subfamily. Requires Mg(2+) as cofactor. In terms of processing, carboxylation is probably crucial for Mg(2+) binding and, consequently, for the gamma-phosphate positioning of ATP.

Its subcellular location is the cytoplasm. The catalysed reaction is UDP-N-acetyl-alpha-D-muramoyl-L-alanyl-D-glutamate + meso-2,6-diaminopimelate + ATP = UDP-N-acetyl-alpha-D-muramoyl-L-alanyl-gamma-D-glutamyl-meso-2,6-diaminopimelate + ADP + phosphate + H(+). It participates in cell wall biogenesis; peptidoglycan biosynthesis. Catalyzes the addition of meso-diaminopimelic acid to the nucleotide precursor UDP-N-acetylmuramoyl-L-alanyl-D-glutamate (UMAG) in the biosynthesis of bacterial cell-wall peptidoglycan. In Rickettsia conorii (strain ATCC VR-613 / Malish 7), this protein is UDP-N-acetylmuramoyl-L-alanyl-D-glutamate--2,6-diaminopimelate ligase.